We begin with the raw amino-acid sequence, 60 residues long: Large ribosomal subunit protein bL32 (60 aa).

The protein belongs to the bacterial ribosomal protein bL32 family.

The protein is Large ribosomal subunit protein bL32 of Kosmotoga olearia (strain ATCC BAA-1733 / DSM 21960 / TBF 19.5.1).